The following is a 332-amino-acid chain: Glyceraldehyde-3-phosphate dehydrogenase (332 aa).

NAD(+) contacts are provided by residues 10-11 (RI), aspartate 32, and methionine 77. Residues 148 to 150 (SCT), threonine 179, 208 to 209 (TG), and arginine 231 contribute to the D-glyceraldehyde 3-phosphate site. Cysteine 149 acts as the Nucleophile in catalysis. Asparagine 313 serves as a coordination point for NAD(+).

The protein belongs to the glyceraldehyde-3-phosphate dehydrogenase family. In terms of assembly, homotetramer.

Its subcellular location is the cytoplasm. The catalysed reaction is D-glyceraldehyde 3-phosphate + phosphate + NAD(+) = (2R)-3-phospho-glyceroyl phosphate + NADH + H(+). Its pathway is carbohydrate degradation; glycolysis; pyruvate from D-glyceraldehyde 3-phosphate: step 1/5. The polypeptide is Glyceraldehyde-3-phosphate dehydrogenase (GPDA) (Phytophthora infestans (Potato late blight agent)).